A 545-amino-acid polypeptide reads, in one-letter code: Chaperonin GroEL 2 (545 aa).

Residues 29-32 (TLGP), 86-90 (DGTTT), Gly413, 479-481 (NAA), and Asp495 each bind ATP.

It belongs to the chaperonin (HSP60) family. In terms of assembly, forms a cylinder of 14 subunits composed of two heptameric rings stacked back-to-back. Interacts with the co-chaperonin GroES.

The protein localises to the cytoplasm. The enzyme catalyses ATP + H2O + a folded polypeptide = ADP + phosphate + an unfolded polypeptide.. Together with its co-chaperonin GroES, plays an essential role in assisting protein folding. The GroEL-GroES system forms a nano-cage that allows encapsulation of the non-native substrate proteins and provides a physical environment optimized to promote and accelerate protein folding. The sequence is that of Chaperonin GroEL 2 from Prochlorococcus marinus (strain MIT 9301).